The sequence spans 551 residues: Calcium-dependent protein kinase 13 (551 aa).

Gly2 carries the N-myristoyl glycine lipid modification. Residues 15–78 are disordered; sequence SFKQTASQRH…APADLGSVLG (64 aa). The region spanning 88–346 is the Protein kinase domain; it reads YAMGRKLGQG…AHEVLCHPWI (259 aa). ATP-binding positions include 94–102 and Lys117; that span reads LGQGQFGTT. Asp212 functions as the Proton acceptor in the catalytic mechanism. Positions 352–382 are autoinhibitory domain; it reads APDRPLDPAVLSRIKQFSAMNKLKKMALRVI. 4 EF-hand domains span residues 389-424, 425-460, 461-496, and 497-530; these read EEIAGLKEMFQTMDADNSGAITYDELKEGLRKYGST, LKDTEIRDLMDAADIDNSGTIDYIEFIAATLHLNKL, EREEHLVAAFSYFDKDGSGYITVDELQQACKEHNMP, and DAFLDDVINEADQDNDGRIDYGEFVAMMTKGNMG. Asp402, Asp404, Ser406, Glu413, Asp438, Asp440, Ser442, Thr444, Glu449, Asp474, Asp476, Ser478, Tyr480, Glu485, Asp508, Asp510, Asp512, Arg514, and Glu519 together coordinate Ca(2+).

It belongs to the protein kinase superfamily. Ser/Thr protein kinase family. CDPK subfamily. In terms of tissue distribution, expressed in vascular tissues of crowns and roots, vascular bundles and central cylinder. Expressed in roots, leaf blades, spikelets and developing seeds.

It localises to the membrane. It carries out the reaction L-seryl-[protein] + ATP = O-phospho-L-seryl-[protein] + ADP + H(+). The enzyme catalyses L-threonyl-[protein] + ATP = O-phospho-L-threonyl-[protein] + ADP + H(+). Its activity is regulated as follows. Activated by calcium. Autophosphorylation may play an important role in the regulation of the kinase activity. Its function is as follows. May play a role in signal transduction pathways that involve calcium as a second messenger. May function in signal transduction pathways that positively regulate responses to cold, salt and drought stresses. The polypeptide is Calcium-dependent protein kinase 13 (Oryza sativa subsp. japonica (Rice)).